A 293-amino-acid polypeptide reads, in one-letter code: Undecaprenyl-diphosphatase (293 aa).

7 consecutive transmembrane segments (helical) span residues 57–77, 106–126, 134–154, 172–192, 212–232, 239–259, and 268–288; these read PGVS…IVYF, LAIA…KLFW, IRSL…LALA, GFVV…RSGS, FLLG…DAFA, VLPL…AIDW, and STWI…AWWL.

Belongs to the UppP family.

The protein resides in the cell inner membrane. It carries out the reaction di-trans,octa-cis-undecaprenyl diphosphate + H2O = di-trans,octa-cis-undecaprenyl phosphate + phosphate + H(+). In terms of biological role, catalyzes the dephosphorylation of undecaprenyl diphosphate (UPP). Confers resistance to bacitracin. This Prochlorococcus marinus (strain MIT 9303) protein is Undecaprenyl-diphosphatase.